The chain runs to 421 residues: Fumarylacetoacetase (421 aa).

Asp-131 is a Ca(2+) binding site. The Proton acceptor role is filled by His-138. Arg-147 is a substrate binding site. Positions 204, 206, and 238 each coordinate Ca(2+). Residue Asp-238 coordinates Mg(2+). 2 residues coordinate substrate: Gln-245 and Tyr-249. The Mg(2+) site is built by Lys-258 and Thr-262. Thr-355 is a substrate binding site.

Belongs to the FAH family. Ca(2+) is required as a cofactor. The cofactor is Mg(2+).

The enzyme catalyses 4-fumarylacetoacetate + H2O = acetoacetate + fumarate + H(+). It functions in the pathway amino-acid degradation; L-phenylalanine degradation; acetoacetate and fumarate from L-phenylalanine: step 6/6. Converts fumarylacetoacetate to acetoacetate and fumarate. Involved in tyrosine catabolic pathway. Catalyzes the final step in the tyrosine degradation pathway. This is Fumarylacetoacetase from Arabidopsis thaliana (Mouse-ear cress).